Here is a 146-residue protein sequence, read N- to C-terminus: Angiogenin (146 aa).

Residues 1-24 form the signal peptide; sequence MAMSLCPLLLVFVLGLGLTPPSLA. Q25 carries the pyrrolidone carboxylic acid modification. Catalysis depends on H37, which acts as the Proton acceptor. Residue R45 participates in tRNA binding. 3 cysteine pairs are disulfide-bonded: C50-C105, C63-C116, and C81-C131. The Nucleolar localization signal motif lies at 55–59; sequence VRRHL. TRNA contacts are provided by C105 and I127. Catalysis depends on H138, which acts as the Proton donor.

This sequence belongs to the pancreatic ribonuclease family. As to quaternary structure, homodimer. Interacts with RNH1; inhibiting ANG ribonuclease activity. Interacts with PCNA.

The protein localises to the secreted. The protein resides in the nucleus. It localises to the nucleolus. Its subcellular location is the cytoplasm. It is found in the stress granule. Has weak tRNA ribonuclease activity by itself due to partial autoinhibition by its C-terminus, which folds into a short alpha-helix that partially occludes the substrate-binding site. In absence of stress, the ribonuclease activity is inhibited by RNH1 in the cytoplasm. In response to stress, dissociates from RNH1 in the cytoplasm and associates with cytoplasmic ribosomes with vacant A-sites: ribosomes directly activate the tRNA ribonuclease activity of ANG by refolding the C-terminal alpha-helix. In response to stress, the angiogenic activity of ANG is inhibited by RNH1 in the nucleus. Functionally, secreted ribonuclease that can either promote or restrict cell proliferation of target cells, depending on the context. Endocytosed in target cells via its receptor PLXNB2 and translocates to the cytoplasm or nucleus. Under stress conditions, localizes to the cytoplasm and promotes the assembly of stress granules (SGs): specifically cleaves a subset of tRNAs within anticodon loops to produce tRNA-derived stress-induced fragments (tiRNAs), resulting in translation repression and inhibition of cell proliferation. tiRNas also prevent formation of apoptosome, thereby promoting cell survival. Preferentially cleaves RNAs between a pyrimidine and an adenosine residue, suggesting that it cleaves the anticodon loop of tRNA(Ala) (32-UUAGCAU-38) after positions 33 and 36. Cleaves a subset of tRNAs, including tRNA(Ala), tRNA(Glu), tRNA(Gly), tRNA(Lys), tRNA(Val), tRNA(His), tRNA(Asp) and tRNA(Sec). Under growth conditions and in differentiated cells, translocates to the nucleus and stimulates ribosomal RNA (rRNA) transcription, including that containing the initiation site sequences of 45S rRNA, thereby promoting cell growth and proliferation. Angiogenin induces vascularization of normal and malignant tissues via its ability to promote rRNA transcription. Involved in hematopoietic stem and progenitor cell (HSPC) growth and survival by promoting rRNA transcription in growth conditions and inhibiting translation in response to stress, respectively. Mediates the crosstalk between myeloid and intestinal epithelial cells to protect the intestinal epithelial barrier integrity: secreted by myeloid cells and promotes intestinal epithelial cells proliferation and survival. Also mediates osteoclast-endothelial cell crosstalk in growing bone: produced by osteoclasts and protects the neighboring vascular cells against senescence by promoting rRNA transcription. In Equus caballus (Horse), this protein is Angiogenin (ANG).